A 208-amino-acid chain; its full sequence is Holliday junction resolvase RecU (208 aa).

4 residues coordinate Mg(2+): Thr87, Asp89, Glu102, and Gln121.

The protein belongs to the RecU family. The cofactor is Mg(2+).

The protein localises to the cytoplasm. The enzyme catalyses Endonucleolytic cleavage at a junction such as a reciprocal single-stranded crossover between two homologous DNA duplexes (Holliday junction).. In terms of biological role, endonuclease that resolves Holliday junction intermediates in genetic recombination. Cleaves mobile four-strand junctions by introducing symmetrical nicks in paired strands. Promotes annealing of linear ssDNA with homologous dsDNA. Required for DNA repair, homologous recombination and chromosome segregation. This chain is Holliday junction resolvase RecU, found in Staphylococcus aureus (strain Mu3 / ATCC 700698).